A 357-amino-acid polypeptide reads, in one-letter code: Hydroxyproline O-arabinosyltransferase RDN1 (357 aa).

The helical; Signal-anchor transmembrane segment at 13–33 (LLMLLMVLGFSFATYNLVFMM) threads the bilayer.

In terms of tissue distribution, expressed in the vasculature of leaves, petioles, stems and roots. Expressed in the vascular cylinder throughout the root, and nodule vasculature.

It localises to the golgi apparatus membrane. It catalyses the reaction trans-4-hydroxy-L-prolyl-[protein] + UDP-beta-L-arabinofuranose = O-(beta-L-arabinofuranosyl)-trans-4-hydroxy-L-prolyl-[protein] + UDP + H(+). Functionally, probable glycosyltransferase involved in the O-arabinosylation of several proteins including extensins and small signaling peptides. Catalyzes the transfer of the initial L-arabinose to the hydroxyl group of Hyp residues. Probably involved in the arabinosylation of CLE12, a signaling peptide that moves from root to shoot, to interact with SUNN receptor kinase signaling that regulates nodulation. Involved in long distance nodulation signaling events. Involved in the autoregulation of nodulation (AON), a long distance systemic signaling from root to shoot and back again, which allows legumes to limit the number of root nodules formed based on available nitrogen and previous rhizobial colonization. Functions in the root, upstream of the shoot receptor kinase SUNN and via CLE peptide, to control AON. The protein is Hydroxyproline O-arabinosyltransferase RDN1 of Medicago truncatula (Barrel medic).